Here is a 145-residue protein sequence, read N- to C-terminus: D-aminoacyl-tRNA deacylase (145 aa).

The short motif at 137–138 is the Gly-cisPro motif, important for rejection of L-amino acids element; that stretch reads GP.

It belongs to the DTD family. In terms of assembly, homodimer.

It is found in the cytoplasm. It catalyses the reaction glycyl-tRNA(Ala) + H2O = tRNA(Ala) + glycine + H(+). The catalysed reaction is a D-aminoacyl-tRNA + H2O = a tRNA + a D-alpha-amino acid + H(+). In terms of biological role, an aminoacyl-tRNA editing enzyme that deacylates mischarged D-aminoacyl-tRNAs. Also deacylates mischarged glycyl-tRNA(Ala), protecting cells against glycine mischarging by AlaRS. Acts via tRNA-based rather than protein-based catalysis; rejects L-amino acids rather than detecting D-amino acids in the active site. By recycling D-aminoacyl-tRNA to D-amino acids and free tRNA molecules, this enzyme counteracts the toxicity associated with the formation of D-aminoacyl-tRNA entities in vivo and helps enforce protein L-homochirality. The polypeptide is D-aminoacyl-tRNA deacylase (Pseudomonas putida (strain W619)).